The sequence spans 257 residues: 3-oxo-5-alpha-steroid 4-dehydrogenase 1 (257 aa).

The next 6 helical transmembrane spans lie at 7-27 (FLLD…YVLL), 50-70 (AAWT…CAGA), 84-104 (ILLA…PFLI), 109-129 (PMPL…GYLQ), 149-169 (FLTG…SDHV), and 208-228 (ALAS…CVLF).

This sequence belongs to the steroid 5-alpha reductase family.

The protein localises to the microsome membrane. It localises to the endoplasmic reticulum membrane. It carries out the reaction a 3-oxo-5alpha-steroid + NADP(+) = a 3-oxo-Delta(4)-steroid + NADPH + H(+). It catalyses the reaction 5alpha-pregnane-3,20-dione + NADP(+) = progesterone + NADPH + H(+). The catalysed reaction is 17beta-hydroxy-5alpha-androstan-3-one + NADP(+) = testosterone + NADPH + H(+). The enzyme catalyses androst-4-ene-3,17-dione + NADPH + H(+) = 5alpha-androstan-3,17-dione + NADP(+). Functionally, converts testosterone into 5-alpha-dihydrotestosterone and progesterone or corticosterone into their corresponding 5-alpha-3-oxosteroids. It plays a central role in sexual differentiation and androgen physiology. This chain is 3-oxo-5-alpha-steroid 4-dehydrogenase 1 (SRD5A1), found in Bos taurus (Bovine).